The following is a 354-amino-acid chain: Hyaluronan and proteoglycan link protein 1 (354 aa).

A propeptide spanning residues Met1 to Ala15 is cleaved from the precursor. Residues Asn21 and Asn56 are each glycosylated (N-linked (GlcNAc...) asparagine). The Ig-like V-type domain occupies Pro38–Val152. 5 disulfide bridges follow: Cys61–Cys139, Cys181–Cys252, Cys205–Cys226, Cys279–Cys349, and Cys304–Cys325. 2 Link domains span residues Val159–Thr254 and Gly259–Arg351.

Belongs to the HAPLN family.

It localises to the secreted. The protein resides in the extracellular space. It is found in the extracellular matrix. In terms of biological role, stabilizes the aggregates of proteoglycan monomers with hyaluronic acid in the extracellular cartilage matrix. The polypeptide is Hyaluronan and proteoglycan link protein 1 (HAPLN1) (Equus caballus (Horse)).